The sequence spans 298 residues: Probable endonuclease 4 (298 aa).

Zn(2+) is bound by residues His69, His111, Glu146, Asp180, His183, His215, Asp228, His230, and Glu260.

It belongs to the AP endonuclease 2 family. It depends on Zn(2+) as a cofactor.

The enzyme catalyses Endonucleolytic cleavage to 5'-phosphooligonucleotide end-products.. Its function is as follows. Endonuclease IV plays a role in DNA repair. It cleaves phosphodiester bonds at apurinic or apyrimidinic (AP) sites, generating a 3'-hydroxyl group and a 5'-terminal sugar phosphate. The polypeptide is Probable endonuclease 4 (Bacillus cytotoxicus (strain DSM 22905 / CIP 110041 / 391-98 / NVH 391-98)).